The sequence spans 165 residues: Cytochrome c-type biogenesis protein CcmE (165 aa).

The Cytoplasmic portion of the chain corresponds to 1 to 29 (MSATAEQNARNPKGKGGFARTVSQRKRKR). Residues 30–50 (LFLIGGALAVLAVAVGLMLTA) form a helical; Signal-anchor for type II membrane protein membrane-spanning segment. Over 51-165 (FNQDIRFFRT…LKKKGVWEGK (115 aa)) the chain is Periplasmic. H143 and Y147 together coordinate heme.

The protein belongs to the CcmE/CycJ family.

The protein resides in the cell inner membrane. Its function is as follows. Heme chaperone required for the biogenesis of c-type cytochromes. Transiently binds heme delivered by CcmC and transfers the heme to apo-cytochromes in a process facilitated by CcmF and CcmH. The protein is Cytochrome c-type biogenesis protein CcmE of Brucella abortus (strain S19).